A 423-amino-acid polypeptide reads, in one-letter code: Ferrochelatase, mitochondrial (423 aa).

The N-terminal 40 residues, 1 to 40, are a transit peptide targeting the mitochondrion; that stretch reads MIRFCPSCFALKRTAPVLNHTSRLGNYFNNTFSKFSVNRM. C200 contacts [2Fe-2S] cluster. D385 is a catalytic residue. C405, C408, and C413 together coordinate [2Fe-2S] cluster.

It belongs to the ferrochelatase family. Monomer. Requires [2Fe-2S] cluster as cofactor.

The protein resides in the mitochondrion inner membrane. Its subcellular location is the cytoplasm. The protein localises to the nucleus. It catalyses the reaction heme b + 2 H(+) = protoporphyrin IX + Fe(2+). Its pathway is porphyrin-containing compound metabolism; protoheme biosynthesis; protoheme from protoporphyrin-IX: step 1/1. Catalyzes the ferrous insertion into protoporphyrin IX. The protein is Ferrochelatase, mitochondrial (hem15) of Schizosaccharomyces pombe (strain 972 / ATCC 24843) (Fission yeast).